Consider the following 258-residue polypeptide: Oxidoreductase fscI (258 aa).

Positions 34, 59, 82, 109, and 141 each coordinate NADP(+). Serine 163 (proton donor) is an active-site residue. Position 193 (arginine 193) interacts with NADP(+).

This sequence belongs to the short-chain dehydrogenases/reductases (SDR) family.

It participates in secondary metabolite biosynthesis. Functionally, oxidoreductase; part of the fragmented gene cluster that mediates the biosynthesis of fusarochromene, a tryptophan-derived metabolite closely related to a group of mycotoxins including fusarochromanone. Within the pathway, fscI catalyzes the formation of the chromene ring from the prenyl moity added by the prenyltransferase fscG. The first step of the pathway is the epimerization of L-tryptophan to D-tryptophan in the presence of the NRPS-like tryptophan epimerase fscC. D-tryptophan is subsequently hydroxylated by the tryptophan 6-hydroxylase fscE to yield 6-hydroxytryptophan. The pyrrole ring undergoes cleavaged by the tryptophan 2,3-dioxygenase fscD and is finally converted to 4-hydroxykyrunenine by the hydrolase fscH. The NRPS-like oxidoreductase fscA reduces the carboxyl group to primary alcohol and the DMATS-type prenyltransferase fscG performs prenylation, followed by the formation of a chromene ring catalyzed by the oxidoreductase fscI, which leads to desacetylfusarochromene. Epoxidation by fscF and rearrangement reactions of chromene double bonds convert compound desacetylfusarochromene to fusarochromanones. Although specific acetyltransferases were not found near the fsc gene cluster, several predicted enzymes containing the N-acetyltransferase superfamily domain are present in the genome of F.equiseti. These predicted enzymes may have the potential to convert desacetylfusarochromene to fusarochromene. The sequence is that of Oxidoreductase fscI from Fusarium equiseti (Fusarium scirpi).